The following is a 422-amino-acid chain: Aspartate--tRNA(Asp/Asn) ligase (422 aa).

An L-aspartate-binding site is contributed by E158. The aspartate stretch occupies residues 180 to 183 (QLYK). R201 serves as a coordination point for L-aspartate. ATP-binding positions include 201–203 (RME), 209–211 (RHL), and E345. Residues S348 and R352 each coordinate L-aspartate. ATP is bound at residue 393–396 (GAER).

The protein belongs to the class-II aminoacyl-tRNA synthetase family. Type 2 subfamily. In terms of assembly, homodimer. Makes part of a ribonucleoprotein particle (RNP) called transamidosome that allows channelling of the aa-tRNA from non-discriminating aspartyl-tRNA synthetase active site to the GatCAB amidotransferase site. The transamidosome complex is formed by two GatCABs, one dimeric ND-AspRSs and two tRNAs(Asn) molecules.

Its subcellular location is the cytoplasm. It carries out the reaction tRNA(Asx) + L-aspartate + ATP = L-aspartyl-tRNA(Asx) + AMP + diphosphate. In terms of biological role, aspartyl-tRNA synthetase with relaxed tRNA specificity since it is able to aspartylate not only its cognate tRNA(Asp) but also tRNA(Asn) with similar efficiencies. Reaction proceeds in two steps: L-aspartate is first activated by ATP to form Asp-AMP and then transferred to the acceptor end of tRNA(Asp/Asn). The sequence is that of Aspartate--tRNA(Asp/Asn) ligase (aspS2) from Thermus thermophilus (strain ATCC 27634 / DSM 579 / HB8).